A 234-amino-acid chain; its full sequence is (5-formylfuran-3-yl)methyl phosphate synthase (234 aa).

The active-site Schiff-base intermediate with substrate is K27. K85 functions as the Proton acceptor in the catalytic mechanism.

Belongs to the MfnB family.

It carries out the reaction 2 D-glyceraldehyde 3-phosphate = 4-(hydroxymethyl)-2-furancarboxaldehyde phosphate + phosphate + 2 H2O. The protein operates within cofactor biosynthesis; methanofuran biosynthesis. Catalyzes the formation of 4-(hydroxymethyl)-2-furancarboxaldehyde phosphate (4-HFC-P) from two molecules of glyceraldehyde-3-P (GA-3-P). The polypeptide is (5-formylfuran-3-yl)methyl phosphate synthase (Methanosarcina barkeri (strain Fusaro / DSM 804)).